The primary structure comprises 239 residues: MKVSLFVTCLIDLFYTNVGKATVELLERLGCEIDFPEAQTCCGQPAYNSGYIKDAKEAMKQMMRAFADADYVVTPSGSCAAMLKEYPHIFRGDPEWEEEAKRLAAKTYELTQFLVNVLRVEDVGASLPGRATYHTSCHMTRLLGEKEVPLRLLEHVKGLELVPLPNAHQCCGFGGTFSVKMGPISEQMVDEKIEHIEEVKADYLIGADCGCLMNIGGRIGRVGKPIRVMHIAEVLNHRN.

It belongs to the LutA/YkgE family.

In terms of biological role, is involved in L-lactate degradation and allows cells to grow with lactate as the sole carbon source. In Geobacillus thermodenitrificans (strain NG80-2), this protein is Lactate utilization protein A.